A 602-amino-acid polypeptide reads, in one-letter code: MASSPKTNALSSSDSANATTWQNFKRLVSYAKPYKLGFVAAIIGMLGYAAIDVYFLSQLKPLVDEGLSGANANFMKWAPLFIIVAFTVRGIAHFIANYCLAWVGNNVVADLRQKLFEHIMSMPVAFHDQTSTGSLISKITFDTEQVLNSVSKSILTIVQQSAFIIGLLGLMFYYSWQLSLIFLLITPIIAVIVSVVSKRFRKVSKNIQGAMGEVTTAAEQTFNGHKVVLTFGGQQREFSRFAKINKHNRQQRMKMRATKSASVPIIQVIASFALAFVFYAITSDSLRDSISPGTFVSIITYMTMLLRPLKMLTNVNSEFQQGMAACTSIFSILDHEKEKDNGDKQLERASGTLSFKHVDFSYKNTNTMTTSDKEQDTKLALNDITFDLAPGETLALVGRSGSGKSTASSLLLRFYDATRGEILIDDTNIEQFQLKDLRKQFSYVSQQVVLFNDTLANNIAYGKPEATEAEIIEAAKSAHVMEFAEHMEQGLETNIGENGALLSGGQRQRVAIARALLCDTPFLILDEATSALDTESERHIQDALQTLQQNRTSIVIAHRLSTIENADKIIVMEQGKIVEQGNHQSLLAKQGAYAQLHSFQFE.

A run of 5 helical transmembrane segments spans residues 36-56 (LGFVAAIIGMLGYAAIDVYFL), 80-100 (LFIIVAFTVRGIAHFIANYCL), 154-174 (ILTIVQQSAFIIGLLGLMFYY), 176-196 (WQLSLIFLLITPIIAVIVSVV), and 261-281 (ASVPIIQVIASFALAFVFYAI). The region spanning 39-321 (VAAIIGMLGY…LTNVNSEFQQ (283 aa)) is the ABC transmembrane type-1 domain. The 238-residue stretch at 362 to 599 (YKNTNTMTTS…QGAYAQLHSF (238 aa)) folds into the ABC transporter domain. An ATP-binding site is contributed by 398 to 405 (GRSGSGKS).

The protein belongs to the ABC transporter superfamily. Lipid exporter (TC 3.A.1.106) family. As to quaternary structure, homodimer.

The protein localises to the cell inner membrane. The enzyme catalyses ATP + H2O + lipid A-core oligosaccharideSide 1 = ADP + phosphate + lipid A-core oligosaccharideSide 2.. Functionally, involved in lipopolysaccharide (LPS) biosynthesis. Translocates lipid A-core from the inner to the outer leaflet of the inner membrane. Transmembrane domains (TMD) form a pore in the inner membrane and the ATP-binding domain (NBD) is responsible for energy generation. The sequence is that of ATP-dependent lipid A-core flippase 1 from Colwellia psychrerythraea (strain 34H / ATCC BAA-681) (Vibrio psychroerythus).